The primary structure comprises 383 residues: Delta(12)-fatty-acid desaturase FAD2 (383 aa).

Transmembrane regions (helical) follow at residues 56-76 and 84-104; these read VVYD…YFHL and VAWP…WVIA. The Histidine box-1 motif lies at 105–109; it reads HECGH. Residues 117–137 traverse the membrane as a helical segment; sequence LLDDIVGLVLHSCLLVPYFSW. The Histidine box-2 signature appears at 141–145; that stretch reads HRRHH. 3 consecutive transmembrane segments (helical) span residues 179–199, 225–245, and 249–269; these read LFTL…FNVS, IYIS…LAAA, and AWVI…LVMI. The Histidine box-3 motif lies at 315-319; it reads HVAHH.

Belongs to the fatty acid desaturase type 1 family. As to expression, expressed in leaves and seeds.

Its subcellular location is the endoplasmic reticulum membrane. It catalyses the reaction (9Z)-octadecenoyl-CoA + 2 Fe(II)-[cytochrome b5] + O2 + 2 H(+) = (9Z,12Z)-octadecadienoyl-CoA + 2 Fe(III)-[cytochrome b5] + 2 H2O. The catalysed reaction is (9Z)-hexadecenoyl-CoA + 2 Fe(II)-[cytochrome b5] + O2 + 2 H(+) = (9Z,12Z)-hexadecadienoyl-CoA + 2 Fe(III)-[cytochrome b5] + 2 H2O. The protein operates within lipid metabolism; polyunsaturated fatty acid biosynthesis. In terms of biological role, catalyzes the desaturation of oleic acid (18:1(9Z)) to linoleic acid (18:2(9Z,12Z)). The sequence is that of Delta(12)-fatty-acid desaturase FAD2 from Vernicia fordii (Tung).